Consider the following 327-residue polypeptide: Regulatory protein MsrR (327 aa).

Over residues 1–18 the composition is skewed to basic and acidic residues; sequence MDKETNDNEYRRQSEHRT. Residues 1-24 are disordered; that stretch reads MDKETNDNEYRRQSEHRTSAPKRK. At 1–31 the chain is on the cytoplasmic side; it reads MDKETNDNEYRRQSEHRTSAPKRKKKKKIRK. A helical; Signal-anchor for type II membrane protein membrane pass occupies residues 32 to 52; it reads LPIILLIVVILLIALVVYIVH. Residues 53-327 are Extracellular-facing; it reads SYNSGVEYAK…QAIKDFLDED (275 aa).

It belongs to the LytR/CpsA/Psr (LCP) family.

The protein localises to the cell membrane. In terms of biological role, involved in SarA attenuation. Affects resistance to oxacillin and teicoplanin, as well as the synthesis of virulence factors. The sequence is that of Regulatory protein MsrR (msrR) from Staphylococcus aureus (strain Mu50 / ATCC 700699).